Consider the following 77-residue polypeptide: Translation initiation factor IF-1, chloroplastic (77 aa).

The S1-like domain occupies 1 to 71 (MKEQKWIHEG…TRGRIIYRLR (71 aa)).

It belongs to the IF-1 family. As to quaternary structure, component of the 30S ribosomal translation pre-initiation complex which assembles on the 30S ribosome in the order IF-2 and IF-3, IF-1 and N-formylmethionyl-tRNA(fMet); mRNA recruitment can occur at any time during PIC assembly.

The protein resides in the plastid. It localises to the chloroplast. Its function is as follows. One of the essential components for the initiation of protein synthesis. Stabilizes the binding of IF-2 and IF-3 on the 30S subunit to which N-formylmethionyl-tRNA(fMet) subsequently binds. Helps modulate mRNA selection, yielding the 30S pre-initiation complex (PIC). Upon addition of the 50S ribosomal subunit IF-1, IF-2 and IF-3 are released leaving the mature 70S translation initiation complex. The sequence is that of Translation initiation factor IF-1, chloroplastic from Montinia caryophyllacea (Wild clove bush).